Here is a 95-residue protein sequence, read N- to C-terminus: MSFKFEAEVRSAQGKGASRRLRHNGQVPAIIYGGNAEPVSIILDHDKVNNAQAHDAFYNEVLTIVVAGKEEQVKVQAIQRHPTKPKLVHLDFKRV.

The protein belongs to the bacterial ribosomal protein bL25 family. In terms of assembly, part of the 50S ribosomal subunit; part of the 5S rRNA/L5/L18/L25 subcomplex. Contacts the 5S rRNA. Binds to the 5S rRNA independently of L5 and L18.

In terms of biological role, this is one of the proteins that binds to the 5S RNA in the ribosome where it forms part of the central protuberance. In Actinobacillus pleuropneumoniae serotype 5b (strain L20), this protein is Large ribosomal subunit protein bL25.